Consider the following 195-residue polypeptide: MAQNLLFCTIAFVFVAVAMAGPGGRGGPHGPGGHGPRGGPGLPPFLVNVTAAGRKEFEAVFKNETLTIAEANTQIAALAEKYGVTATYNEFVANRTALLAEVKKNQTAVIGNLTAVSAQLATIYQNKDQTRKAQEEAVDALRKEHPVEVNAIKFIRAQLGGEKVHGGSHGGLRGGPGGPRDGPRGGPRGGPRGGR.

Positions 162–195 (EKVHGGSHGGLRGGPGGPRDGPRGGPRGGPRGGR) are disordered. Residues 167–195 (GSHGGLRGGPGGPRDGPRGGPRGGPRGGR) are compositionally biased toward gly residues.

Belongs to the SXP/RAL-2 family.

The polypeptide is SXP/RAL-2-like protein 2 (Caenorhabditis elegans).